The primary structure comprises 113 residues: MEVKASARFVRIAPRKVRVVIDLVRGKSVNEALALLKFIPKRASEPVAKVIASAAANAEHNFSLNKDNLYIAKAYVDQGPTLKRYHPRQRGQAFPILKRTSHITVVVKEKEAK.

Belongs to the universal ribosomal protein uL22 family. As to quaternary structure, part of the 50S ribosomal subunit.

Its function is as follows. This protein binds specifically to 23S rRNA; its binding is stimulated by other ribosomal proteins, e.g. L4, L17, and L20. It is important during the early stages of 50S assembly. It makes multiple contacts with different domains of the 23S rRNA in the assembled 50S subunit and ribosome. Functionally, the globular domain of the protein is located near the polypeptide exit tunnel on the outside of the subunit, while an extended beta-hairpin is found that lines the wall of the exit tunnel in the center of the 70S ribosome. The polypeptide is Large ribosomal subunit protein uL22 (Symbiobacterium thermophilum (strain DSM 24528 / JCM 14929 / IAM 14863 / T)).